Here is a 462-residue protein sequence, read N- to C-terminus: ATP synthase subunit beta (462 aa).

150 to 157 (GGAGVGKT) contributes to the ATP binding site.

The protein belongs to the ATPase alpha/beta chains family. F-type ATPases have 2 components, CF(1) - the catalytic core - and CF(0) - the membrane proton channel. CF(1) has five subunits: alpha(3), beta(3), gamma(1), delta(1), epsilon(1). CF(0) has three main subunits: a(1), b(2) and c(9-12). The alpha and beta chains form an alternating ring which encloses part of the gamma chain. CF(1) is attached to CF(0) by a central stalk formed by the gamma and epsilon chains, while a peripheral stalk is formed by the delta and b chains. In this bacterium the a and b subunits are transcribed but do not seem to be translated, thus the ATP synthase consists of the alpha, beta, gamma, delta, epsilon and c subunits.

The protein resides in the cell membrane. It catalyses the reaction ATP + H2O + 4 H(+)(in) = ADP + phosphate + 5 H(+)(out). Produces ATP from ADP in the presence of a proton gradient across the membrane. The catalytic sites are hosted primarily by the beta subunits. The protein is ATP synthase subunit beta of Moorella thermoacetica (strain ATCC 39073 / JCM 9320).